A 342-amino-acid polypeptide reads, in one-letter code: N-acetyl-gamma-glutamyl-phosphate reductase (342 aa).

Cysteine 147 is an active-site residue.

Belongs to the NAGSA dehydrogenase family. Type 1 subfamily.

The protein localises to the cytoplasm. It catalyses the reaction N-acetyl-L-glutamate 5-semialdehyde + phosphate + NADP(+) = N-acetyl-L-glutamyl 5-phosphate + NADPH + H(+). Its pathway is amino-acid biosynthesis; L-arginine biosynthesis; N(2)-acetyl-L-ornithine from L-glutamate: step 3/4. Its function is as follows. Catalyzes the NADPH-dependent reduction of N-acetyl-5-glutamyl phosphate to yield N-acetyl-L-glutamate 5-semialdehyde. The sequence is that of N-acetyl-gamma-glutamyl-phosphate reductase from Campylobacter jejuni (strain RM1221).